The primary structure comprises 440 residues: Protein FPV117 (440 aa).

Belongs to the poxviruses G5 family.

The sequence is that of Protein FPV117 from Fowlpox virus (strain NVSL) (FPV).